A 61-amino-acid chain; its full sequence is Small ribosomal subunit protein uS14B (61 aa).

Zn(2+)-binding residues include cysteine 24, cysteine 27, cysteine 40, and cysteine 43.

The protein belongs to the universal ribosomal protein uS14 family. Zinc-binding uS14 subfamily. Part of the 30S ribosomal subunit. Contacts proteins S3 and S10. The cofactor is Zn(2+).

Its function is as follows. Binds 16S rRNA, required for the assembly of 30S particles and may also be responsible for determining the conformation of the 16S rRNA at the A site. The sequence is that of Small ribosomal subunit protein uS14B from Mycolicibacterium gilvum (strain PYR-GCK) (Mycobacterium gilvum (strain PYR-GCK)).